Here is a 417-residue protein sequence, read N- to C-terminus: Phosphoglycerate kinase (417 aa).

14 residues coordinate (2R)-3-phosphoglycerate: Val-23, Asp-24, Phe-25, Asn-26, Gln-38, Arg-39, Ser-62, His-63, Gly-65, Arg-66, Leu-121, Arg-122, His-169, and Arg-170. Gly-213 serves as a coordination point for ADP. Gly-213 contacts CDP. Residues Ala-214 and Lys-215 each contribute to the AMP site. An ATP-binding site is contributed by Ala-214. Residue Ala-214 participates in Mg(2+) binding. CDP is bound at residue Asp-218. Asp-218 provides a ligand contact to Mg(2+). AMP is bound at residue Lys-219. Lys-219 lines the ATP pocket. Gly-237 provides a ligand contact to ADP. Gly-237 serves as a coordination point for CDP. Positions 238 and 312 each coordinate AMP. 2 residues coordinate ATP: Gly-238 and Gly-312. CDP contacts are provided by Gly-337 and Phe-342. Phe-342 is an ADP binding site. Glu-343 is a binding site for AMP. Residues Glu-343, Asp-374, and Thr-375 each contribute to the ATP site. Residue Asp-374 participates in Mg(2+) binding.

It belongs to the phosphoglycerate kinase family. As to quaternary structure, monomer. Mg(2+) is required as a cofactor.

Its subcellular location is the cytoplasm. The protein localises to the mitochondrion. The catalysed reaction is (2R)-3-phosphoglycerate + ATP = (2R)-3-phospho-glyceroyl phosphate + ADP. The protein operates within carbohydrate degradation; glycolysis; pyruvate from D-glyceraldehyde 3-phosphate: step 2/5. Its function is as follows. Catalyzes one of the two ATP producing reactions in the glycolytic pathway via the reversible conversion of 1,3-diphosphoglycerate to 3-phosphoglycerate. Both L- and D- forms of purine and pyrimidine nucleotides can be used as substrates, but the activity is much lower on pyrimidines. Negatively regulates the biosynthesis of acetyl-CoA from pyruvate in the mitochondrion. The polypeptide is Phosphoglycerate kinase (PGK1) (Candida maltosa (Yeast)).